A 40-amino-acid chain; its full sequence is Photosystem II reaction center protein J (40 aa).

Residues 8–28 (IPLWLIGTVTGTLVIGLIGIF) traverse the membrane as a helical segment.

Belongs to the PsbJ family. PSII is composed of 1 copy each of membrane proteins PsbA, PsbB, PsbC, PsbD, PsbE, PsbF, PsbH, PsbI, PsbJ, PsbK, PsbL, PsbM, PsbT, PsbX, PsbY, PsbZ, Psb30/Ycf12, at least 3 peripheral proteins of the oxygen-evolving complex and a large number of cofactors. It forms dimeric complexes.

The protein resides in the plastid. The protein localises to the chloroplast thylakoid membrane. Its function is as follows. One of the components of the core complex of photosystem II (PSII). PSII is a light-driven water:plastoquinone oxidoreductase that uses light energy to abstract electrons from H(2)O, generating O(2) and a proton gradient subsequently used for ATP formation. It consists of a core antenna complex that captures photons, and an electron transfer chain that converts photonic excitation into a charge separation. This Cycas taitungensis (Prince sago) protein is Photosystem II reaction center protein J.